The following is a 353-amino-acid chain: Protein RecA (353 aa).

ATP is bound at residue 67–74 (GPESSGKT). Positions 330 to 353 (SNPNSTPDFSVDDSEGVAETNEDF) are disordered. The span at 339 to 353 (SVDDSEGVAETNEDF) shows a compositional bias: acidic residues.

It belongs to the RecA family.

The protein resides in the cytoplasm. Functionally, can catalyze the hydrolysis of ATP in the presence of single-stranded DNA, the ATP-dependent uptake of single-stranded DNA by duplex DNA, and the ATP-dependent hybridization of homologous single-stranded DNAs. It interacts with LexA causing its activation and leading to its autocatalytic cleavage. The chain is Protein RecA from Escherichia coli O157:H7 (strain EC4115 / EHEC).